Here is a 311-residue protein sequence, read N- to C-terminus: Aspartate carbamoyltransferase catalytic subunit (311 aa).

Residues Arg55 and Thr56 each contribute to the carbamoyl phosphate site. Position 85 (Lys85) interacts with L-aspartate. Arg106, His135, and Gln138 together coordinate carbamoyl phosphate. Positions 168 and 230 each coordinate L-aspartate. Carbamoyl phosphate contacts are provided by Leu268 and Pro269.

This sequence belongs to the aspartate/ornithine carbamoyltransferase superfamily. ATCase family. Heterododecamer (2C3:3R2) of six catalytic PyrB chains organized as two trimers (C3), and six regulatory PyrI chains organized as three dimers (R2).

The enzyme catalyses carbamoyl phosphate + L-aspartate = N-carbamoyl-L-aspartate + phosphate + H(+). Its pathway is pyrimidine metabolism; UMP biosynthesis via de novo pathway; (S)-dihydroorotate from bicarbonate: step 2/3. In terms of biological role, catalyzes the condensation of carbamoyl phosphate and aspartate to form carbamoyl aspartate and inorganic phosphate, the committed step in the de novo pyrimidine nucleotide biosynthesis pathway. The protein is Aspartate carbamoyltransferase catalytic subunit of Yersinia enterocolitica serotype O:8 / biotype 1B (strain NCTC 13174 / 8081).